We begin with the raw amino-acid sequence, 902 residues long: Protein translocase subunit SecA (902 aa).

Residues Gln89, 107–111 (GEGKT), and Asp502 each bind ATP. The Zn(2+) site is built by Cys884, Cys886, Cys895, and His896.

The protein belongs to the SecA family. In terms of assembly, monomer and homodimer. Part of the essential Sec protein translocation apparatus which comprises SecA, SecYEG and auxiliary proteins SecDF-YajC and YidC. It depends on Zn(2+) as a cofactor.

It localises to the cell inner membrane. It is found in the cytoplasm. The enzyme catalyses ATP + H2O + cellular proteinSide 1 = ADP + phosphate + cellular proteinSide 2.. Its function is as follows. Part of the Sec protein translocase complex. Interacts with the SecYEG preprotein conducting channel. Has a central role in coupling the hydrolysis of ATP to the transfer of proteins into and across the cell membrane, serving both as a receptor for the preprotein-SecB complex and as an ATP-driven molecular motor driving the stepwise translocation of polypeptide chains across the membrane. The protein is Protein translocase subunit SecA of Agrobacterium fabrum (strain C58 / ATCC 33970) (Agrobacterium tumefaciens (strain C58)).